The primary structure comprises 1154 residues: Caspase recruitment domain-containing protein 11 (1154 aa).

Residues 18-110 enclose the CARD domain; the sequence is EEDALWENVE…ELYKLVTGKE (93 aa). The linker stretch occupies residues 111 to 128; sequence PTRRFSTIVVEEGHEGLT. A coiled-coil region spans residues 130–449; the sequence is FLMNEVIKLQ…KDSNNLDQSL (320 aa). Phosphoserine is present on residues Ser448 and Ser466. The tract at residues 450 to 666 is inhibitory domain (ID); it reads PRNLPVTIIS…GHVRGPGPSV (217 aa). The tract at residues 460-626 is disordered; that stretch reads QDFGDASPRT…HSSSSSHQSE (167 aa). The span at 473 to 484 shows a compositional bias: acidic residues; the sequence is EADDSSTSEESP. Ser512 carries the phosphoserine modification. Residues 518-529 show a composition bias toward basic and acidic residues; sequence RTSDFQAKGHEE. Polar residues predominate over residues 534-562; it reads ASPSSCGSLPITNSFTKMQPPRSRSSIMS. At Ser535 the chain carries Phosphoserine. Ser559 is subject to Phosphoserine; by PKC/PRKCB and PKC/PRKCQ. A compositionally biased stretch (basic and acidic residues) spans 573–587; the sequence is IVRRYKEDAPHRSTV. Position 593 is a phosphoserine (Ser593). The segment covering 614-625 has biased composition (low complexity); that stretch reads SSIHSSSSSHQS. A phosphoserine; by PKC/PRKCB and PKC/PRKCQ mark is found at Ser644 and Ser652. The PDZ domain occupies 667–755; the sequence is QHTTLNGDSL…PVTLHYKVNH (89 aa). A phosphoserine mark is found at Ser886 and Ser925. One can recognise a Guanylate kinase-like domain in the interval 973 to 1140; the sequence is RRRPVLFTPT…LLRVVKDKIG (168 aa).

In terms of assembly, homodimer; disulfide-linked. Homomultimer; polymerizes following activation, forming a nucleating helical template that seeds BCL10-filament formation via a CARD-CARD interaction. Interacts (via CARD domain) with BCL10 (via CARD domain); interaction takes place following CARD11 activation and polymerization, leading to the formation of a filamentous CBM complex assembly. Component of a CBM complex (CARD11-BCL10-MALT1) complex involved in NF-kappa-B activation. Found in a membrane raft complex, at least composed of BCL10, CARD11, DPP4 and IKBKB. Interacts (via PDZ domain) with DPP4 (via cytoplasmic tail). Phosphorylation at Ser-559, Ser-644 and Ser-652 by PRKCB and PRKCQ leads to a shift from an inactive to an active form that activates the NF-kappa-B signaling. Detected in adult peripheral blood leukocytes, thymus, spleen and liver. Also found in promyelocytic leukemia HL-60 cells, chronic myelogenous leukemia K-562 cells, Burkitt's lymphoma Raji cells and colorectal adenocarcinoma SW480 cells. Not detected in HeLaS3, MOLT-4, A-549 and G431 cells.

Its subcellular location is the cytoplasm. The protein localises to the membrane raft. Maintained in an autoinhibited state via homodimerization in which the CARD domain forms an extensive interaction with the adjacent linker and coiled-coil regions. Activation downstream of T-cell receptor (TCR) by phosphorylation by PRKCB and PRKCQ triggers CARD11 homooligomerization and BCL10 recruitment, followed by activation of NF-kappa-B. Adapter protein that plays a key role in adaptive immune response by transducing the activation of NF-kappa-B downstream of T-cell receptor (TCR) and B-cell receptor (BCR) engagement. Transduces signals downstream TCR or BCR activation via the formation of a multiprotein complex together with BCL10 and MALT1 that induces NF-kappa-B and MAP kinase p38 (MAPK11, MAPK12, MAPK13 and/or MAPK14) pathways. Upon activation in response to TCR or BCR triggering, CARD11 homooligomerizes to form a nucleating helical template that recruits BCL10 via CARD-CARD interaction, thereby promoting polymerization of BCL10 and subsequent recruitment of MALT1: this leads to I-kappa-B kinase (IKK) phosphorylation and degradation, and release of NF-kappa-B proteins for nuclear translocation. Its binding to DPP4 induces T-cell proliferation and NF-kappa-B activation in a T-cell receptor/CD3-dependent manner. Promotes linear ubiquitination of BCL10 by promoting the targeting of BCL10 to RNF31/HOIP. Stimulates the phosphorylation of BCL10. Also activates the TORC1 signaling pathway. The chain is Caspase recruitment domain-containing protein 11 from Homo sapiens (Human).